The primary structure comprises 412 residues: Motilin receptor (412 aa).

The Extracellular portion of the chain corresponds to Met1 to Leu35. A glycan (N-linked (GlcNAc...) asparagine) is linked at Asn6. The chain crosses the membrane as a helical span at residues Gly36 to Asn56. Residues Val57–Asn74 are Cytoplasmic-facing. The helical transmembrane segment at Leu75 to Asp94 threads the bilayer. Over Leu95–Arg112 the chain is Extracellular. Cys111 and Cys235 are disulfide-bonded. A helical transmembrane segment spans residues Leu113–Val134. At Glu135–Ala157 the chain is on the cytoplasmic side. The helical transmembrane segment at Leu158–Gly178 threads the bilayer. Topologically, residues Val179–Arg246 are extracellular. N-linked (GlcNAc...) asparagine glycosylation occurs at Asn192. A helical membrane pass occupies residues Val247–Ile270. The Cytoplasmic portion of the chain corresponds to Gly271–Arg298. A helical membrane pass occupies residues Val299–Ile320. Topologically, residues Tyr321–Gln334 are extracellular. The chain crosses the membrane as a helical span at residues Tyr335–Ile358. Over Ser359–Gly412 the chain is Cytoplasmic.

Belongs to the G-protein coupled receptor 1 family. As to expression, expressed only in thyroid, stomach, and bone marrow.

The protein localises to the cell membrane. Functionally, receptor for motilin. The polypeptide is Motilin receptor (MLNR) (Homo sapiens (Human)).